Here is a 230-residue protein sequence, read N- to C-terminus: 3-beta-hydroxysteroid-Delta(8),Delta(7)-isomerase (230 aa).

An N-acetylthreonine modification is found at Thr-2. 4 helical membrane-spanning segments follow: residues 29–49 (WHILVGLFSFSGVLIVITWLL), 66–86 (LCWFAVCTFIHLVIEGWFSFY), 121–141 (MESVTACLWGPLSLWVVIAFL), and 185–205 (FWFYFVIMNAIWLVIPGILVF). One can recognise an EXPERA domain in the interval 61 to 204 (GRRLALCWFA…IWLVIPGILV (144 aa)).

The protein belongs to the EBP family. Expressed in liver.

Its subcellular location is the endoplasmic reticulum membrane. It is found in the nucleus envelope. The protein resides in the cytoplasmic vesicle. The enzyme catalyses lathosterol = 5alpha-cholest-8-en-3beta-ol. It catalyses the reaction zymosterol = 5alpha-cholesta-7,24-dien-3beta-ol. The catalysed reaction is 5,6alpha-epoxy-5alpha-cholestan-3beta-ol + H2O = 5alpha-cholestane-3beta,5,6beta-triol. It carries out the reaction 5,6beta-epoxy-5beta-cholestan-3beta-ol + H2O = 5alpha-cholestane-3beta,5,6beta-triol. It functions in the pathway steroid biosynthesis; cholesterol biosynthesis. With respect to regulation, enzymatic activity is induced by 25-hydroxycholesterol, cholestyramine and lovastatin. Functionally, isomerase that catalyzes the conversion of Delta(8)-sterols to their corresponding Delta(7)-isomers. Its function is as follows. Component of the microsomal antiestrogen binding site (AEBS), a multiproteic complex at the ER membrane that consists of an association between EBP and 7-dehydrocholesterol reductase/DHCR7. This complex is responsible for cholesterol-5,6-epoxide hydrolase (ChEH) activity, which consists in the hydration of cholesterol-5,6-epoxides (5,6-EC) into cholestane-3beta,5alpha,6beta-triol (CT). The precise role of each component of this complex has not been described yet. In Rattus norvegicus (Rat), this protein is 3-beta-hydroxysteroid-Delta(8),Delta(7)-isomerase.